A 279-amino-acid polypeptide reads, in one-letter code: MNQLEFVKLHGNGNDFILIDELNGERIPEDEKSEASRILCHRNFGIGGDGVLFLVPSERADIGMRLFQPDGSEAEMCGNGIRCLAKHAWESGYVGERFSVETLAGVIPIQVRRDRKGFWARVEMGIPRFERSEIPADGEGTFLKVPLHGFEVSAVNTGVPHAVIFVENLDIPVEQIAPKIRHSSCFPEGANVNFVRLGNHLEVRTFERGVEAETLSCGTGSVAAAAVARRLGLVGETVEVMTKGGPLRISFAGEKAFMEGPAVTVCRGVVSDEILQTLQ.

Residues N14 and Q68 each contribute to the substrate site. The active-site Proton donor is the C77. Substrate-binding positions include 78-79, N191, and 207-208; these read GN and ER. The active-site Proton acceptor is C217. Residue 218-219 participates in substrate binding; the sequence is GT.

This sequence belongs to the diaminopimelate epimerase family. Homodimer.

It localises to the cytoplasm. It catalyses the reaction (2S,6S)-2,6-diaminopimelate = meso-2,6-diaminopimelate. The protein operates within amino-acid biosynthesis; L-lysine biosynthesis via DAP pathway; DL-2,6-diaminopimelate from LL-2,6-diaminopimelate: step 1/1. Its function is as follows. Catalyzes the stereoinversion of LL-2,6-diaminopimelate (L,L-DAP) to meso-diaminopimelate (meso-DAP), a precursor of L-lysine. This is Diaminopimelate epimerase from Methanothrix thermoacetophila (strain DSM 6194 / JCM 14653 / NBRC 101360 / PT) (Methanosaeta thermophila).